We begin with the raw amino-acid sequence, 386 residues long: Acyl-CoA ligase lcsD (386 aa).

The interval 62–132 is SBD1; it reads ELEQTLLAIQ…ELLPACKIIQ (71 aa). Position 107-115 (107-115) interacts with ATP; it reads AVGASGISK. The SBD2 stretch occupies residues 133–195; sequence GYGMTETTGV…LRSPSVVIGY (63 aa). Thr-137 lines the substrate pocket. Positions 216 and 235 each coordinate ATP. Residues 243 to 245 and 313 to 316 contribute to the CoA site; these read RGL and HLDG. An ATP-binding site is contributed by Lys-331. The disordered stretch occupies residues 352–386; it reads REKAANGVHKVHVNGVKRPEKMEVFDLSSDDEDDD.

The protein belongs to the ATP-dependent AMP-binding enzyme family.

Its pathway is secondary metabolite biosynthesis. Functionally, acyl-CoA ligase; part of the gene cluster that mediates the biosynthesis of the lipopeptide antibiotics leucinostatins that show extensive biological activities, including antimalarial, antiviral, antibacterial, antifungal, and antitumor activities, as well as phytotoxic. Leucinostatin A contains nine amino acid residues, including the unusual amino acid 4-methyl-L-proline (MePro), 2-amino-6-hydroxy-4-methyl-8-oxodecanoic acid (AHyMeOA), 3-hydroxyleucine (HyLeu), alpha-aminoisobutyric acid (AIB), beta-Ala, a 4-methylhex-2-enoic acid at the N-terminus as well as a N1,N1-dimethylpropane-1,2-diamine (DPD) at the C-terminus. The biosynthesis of leucinostatins is probably initiated with the assembly of 4-methylhex-2-enoic acid by a reducing PKS. Two reducing polyketide synthases, lcsB and lcsC, have been identified in the cluster and it is not clear which is the one that assembles 4-methylhex-2-enoic acid since both contain KS, AT, DH, cMT, ER, KR and ACP domains. The polyketide residue might be transferred to the NRPS lcsA, mediated by two additional enzymes, the acyl-CoA ligase lcsD and the thioesterase lcsE. The linear polyketide carboxylic acid, which is released from PKS, is converted to a CoA thioester by lcsD, and then lcsE hydrolyzes the thiol bond and shuttles the polyketide intermediate to lcsA. The C domain of the first module catalyzed the condensation of 4-methylhex-2-enoic acid and MePro carried by domain A1, followed by successive condensations of nine amino acids to trigger the elongation of the linear peptide. A5 and A6 domains of lcsA are proposed to incorporate leucine, A2 AHyMeOA, and A3 incorporates HyLeu. A4, A7 and A8 incorporate AIB. The AHyMeOA in leucinostatin A activated by the A2 might be produced by the second PKS (lcsB or lcsC) present within the cluster. The MePro is probably produced via leucine cyclization and may originate from a separate pathway, independent of the cluster. Another nonproteinogenic amino acid, beta-Ala, could be produced by an aspartic acid decarboxylase also localized outside of the cluster. Two candidates are VFPBJ_01400 and VFPBJ_10476. The final peptide scaffold may be released by the NAD(P)H-dependent thioester reductase (TE) at the C-terminal region of lcsA. Transamination of the lcsA product by the transaminase lcsP may produce DPD at the C-terminus. Further hydroxylation steps performed alternatively by the cytochrome P450 monooxygenases lcsI, lcsK and lcsN then yield the non-methylated leucinostatins precursor. It is also possible that leucines can be hydroxylated prior to their incorporation into the peptide. Varying extents of methylation then lead to the formation of leucinostatins A and B. The chain is Acyl-CoA ligase lcsD from Purpureocillium lilacinum (Paecilomyces lilacinus).